The following is a 231-amino-acid chain: Heptaprenylglyceryl phosphate synthase (231 aa).

A sn-glycerol 1-phosphate-binding site is contributed by K12. 2 residues coordinate Mg(2+): D14 and T40. Residues 159-164 (YMEYSG), G189, and 209-210 (GN) each bind sn-glycerol 1-phosphate.

Belongs to the GGGP/HepGP synthase family. Group I subfamily. In terms of assembly, homodimer. Mg(2+) serves as cofactor.

It catalyses the reaction sn-glycerol 1-phosphate + all-trans-heptaprenyl diphosphate = 3-heptaprenyl-sn-glycero-1-phosphate + diphosphate. Its pathway is membrane lipid metabolism; glycerophospholipid metabolism. Prenyltransferase that catalyzes in vivo the transfer of the heptaprenyl moiety of heptaprenyl pyrophosphate (HepPP; 35 carbon atoms) to the C3 hydroxyl of sn-glycerol-1-phosphate (G1P), producing heptaprenylglyceryl phosphate (HepGP). This reaction is an ether-bond-formation step in the biosynthesis of archaea-type G1P-based membrane lipids found in Bacillales. The polypeptide is Heptaprenylglyceryl phosphate synthase (Brevibacillus brevis (strain 47 / JCM 6285 / NBRC 100599)).